Consider the following 890-residue polypeptide: ATP-dependent DNA helicase DDX11 (890 aa).

The 421-residue stretch at 4-424 (KSGRFPFPFQ…KNLMYIKQIL (421 aa)) folds into the Helicase ATP-binding domain. Residue 39 to 46 (SPTGTGKS) participates in ATP binding. Over residues 71 to 85 (LLEGQKDSDVVKEKN) the composition is skewed to basic and acidic residues. Disordered regions lie at residues 71–95 (LLEGQKDSDVVKEKNSNSGPPEPDW) and 176–199 (EYESDDEATPKSRLCDDDNDDDDD). [4Fe-4S] cluster contacts are provided by C246, C264, C294, and C329. The short motif at 372–375 (DEAH) is the DEAH box element.

This sequence belongs to the DEAD box helicase family. DEAH subfamily. DDX11/CHL1 sub-subfamily. [4Fe-4S] cluster is required as a cofactor.

The protein resides in the nucleus. It localises to the nucleolus. It is found in the cytoplasm. Its subcellular location is the cytoskeleton. The protein localises to the spindle pole. The protein resides in the midbody. It localises to the microtubule organizing center. It is found in the centrosome. It catalyses the reaction Couples ATP hydrolysis with the unwinding of duplex DNA at the replication fork by translocating in the 5'-3' direction. This creates two antiparallel DNA single strands (ssDNA). The leading ssDNA polymer is the template for DNA polymerase III holoenzyme which synthesizes a continuous strand.. The enzyme catalyses ATP + H2O = ADP + phosphate + H(+). Functionally, DNA-dependent ATPase and ATP-dependent DNA helicase that participates in various functions in genomic stability, including DNA replication, DNA repair and heterochromatin organization as well as in ribosomal RNA synthesis. Plays a role in DNA double-strand break (DSB) repair at the DNA replication fork during DNA replication recovery from DNA damage. Plays a role in the regulation of sister chromatid cohesion and mitotic chromosome segregation. Stimulates 5'-single-stranded DNA flap endonuclease activity of FEN1 in an ATP- and helicase-independent manner. Also plays a role in heterochromatin organization. Involved in rRNA transcription activation through binding to active hypomethylated rDNA gene loci by recruiting UBTF and the RNA polymerase Pol I transcriptional machinery. Plays a role in embryonic development. Associates with chromatin at DNA replication fork regions. Binds to single- and double-stranded DNAs. The protein is ATP-dependent DNA helicase DDX11 of Danio rerio (Zebrafish).